Here is a 266-residue protein sequence, read N- to C-terminus: Putative carbamate hydrolase RutD (266 aa).

The protein belongs to the AB hydrolase superfamily. Hydrolase RutD family.

It catalyses the reaction carbamate + 2 H(+) = NH4(+) + CO2. Its function is as follows. Involved in pyrimidine catabolism. May facilitate the hydrolysis of carbamate, a reaction that can also occur spontaneously. This chain is Putative carbamate hydrolase RutD, found in Escherichia coli (strain B / BL21-DE3).